The primary structure comprises 282 residues: Ribosomal RNA small subunit methyltransferase I (282 aa).

Belongs to the methyltransferase superfamily. RsmI family.

The protein localises to the cytoplasm. The catalysed reaction is cytidine(1402) in 16S rRNA + S-adenosyl-L-methionine = 2'-O-methylcytidine(1402) in 16S rRNA + S-adenosyl-L-homocysteine + H(+). In terms of biological role, catalyzes the 2'-O-methylation of the ribose of cytidine 1402 (C1402) in 16S rRNA. This is Ribosomal RNA small subunit methyltransferase I from Buchnera aphidicola subsp. Acyrthosiphon pisum (strain APS) (Acyrthosiphon pisum symbiotic bacterium).